Consider the following 230-residue polypeptide: UPF0758 protein ABC2615 (230 aa).

The region spanning 104–226 (VISSPEDAAE…FISLKERGFF (123 aa)) is the MPN domain. Residues H175, H177, and D188 each contribute to the Zn(2+) site. Positions 175-188 (HNHPSGDPSPSPED) match the JAMM motif motif.

Belongs to the UPF0758 family.

This chain is UPF0758 protein ABC2615, found in Shouchella clausii (strain KSM-K16) (Alkalihalobacillus clausii).